The following is a 508-amino-acid chain: MDPRARYPPGIGNGRGGNPNYYNRGPPLQQQHNHHQQQQTSAPHHQQYVQRQPQQHHHHNHHQQHQQQQQQWLRRNQIAREAAGTDRNSEPKAVAQSPAVDGIDSSSQDWKAQLKLPPQDTRYRTEDVTATKGNEFEDYFLKRELLMGIYEKGFERPSPIQEESIPIALTGSDILARAKNGTGKTAAFCIPALEKIDQEKNAIQVVILVPTRELALQTSQVCKELGKHLKIQVMVTTGGTSLKDDIIRLYQPVHLLVGTPGRILDLTKKGICILKDCSMLIMDEADKLLSPEFQPSVEQLIRYLPASRQILMFSATFPVTVKEFKDKYLPKPYVINLMDELTLKGITQFYAFVEERQKVHCLNTLFSKLQINQSIIFCNSVNRVELLAKKITELGYSCFYIHAKMLQDHRNRVFHDFRNGACRNLVCTDLFTRGIDIQAVNVVINFDFPKTAETYLHRVGRSGRFGHLGLAVNLITYEDRFNLYRIEQELGTEIKPIPPQIDQAIYCQ.

A disordered region spans residues 1-123 (MDPRARYPPG…LKLPPQDTRY (123 aa)). Low complexity predominate over residues 18–53 (NPNYYNRGPPLQQQHNHHQQQQTSAPHHQQYVQRQP). The segment covering 54–64 (QQHHHHNHHQQ) has biased composition (basic residues). The Q motif motif lies at 134–162 (NEFEDYFLKRELLMGIYEKGFERPSPIQE). A Helicase ATP-binding domain is found at 165 to 335 (IPIALTGSDI…DKYLPKPYVI (171 aa)). 178-185 (AKNGTGKT) is an ATP binding site. The DEAD box motif lies at 283–286 (DEAD). A Helicase C-terminal domain is found at 345-505 (GITQFYAFVE…PIPPQIDQAI (161 aa)).

The protein belongs to the DEAD box helicase family. DDX6/DHH1 subfamily.

It localises to the cytoplasm. Its subcellular location is the P-body. It carries out the reaction ATP + H2O = ADP + phosphate + H(+). Its function is as follows. ATP-dependent RNA helicase involved in mRNA turnover, and more specifically in mRNA decapping. This is DEAD-box ATP-dependent RNA helicase 8 from Oryza sativa subsp. japonica (Rice).